A 711-amino-acid polypeptide reads, in one-letter code: Early transcription factor 82 kDa subunit (711 aa).

It belongs to the poxviridae VETF large subunit family. As to quaternary structure, heterodimer of a 70 kDa and a 82 kDa subunit. Part of the early transcription complex composed of ETF, RAP94, and the DNA-directed RNA polymerase.

The protein localises to the virion. Acts with RNA polymerase to initiate transcription from early gene promoters. Is recruited by the RPO-associated protein of 94 kDa (RAP94) to form the early transcription complex, which also contains the core RNA polymerase. ETF heterodimer binds to early gene promoters. The protein is Early transcription factor 82 kDa subunit (VETFL) of Oryctolagus cuniculus (Rabbit).